Consider the following 185-residue polypeptide: Dual specificity protein phosphatase 3 (185 aa).

One can recognise a Tyrosine-protein phosphatase domain in the interval 28-179 (QPCNEVTPRI…LCQLNDRLAK (152 aa)). The active-site Phosphocysteine intermediate is cysteine 124.

The protein belongs to the protein-tyrosine phosphatase family. Non-receptor class dual specificity subfamily. Microtubule inner protein component of sperm flagellar doublet microtubules. Interacts with VRK3; this interaction activates DUSP3 phosphatase activity.

Its subcellular location is the nucleus. It is found in the cytoplasm. The protein localises to the cytoskeleton. The protein resides in the flagellum axoneme. The enzyme catalyses O-phospho-L-tyrosyl-[protein] + H2O = L-tyrosyl-[protein] + phosphate. It catalyses the reaction O-phospho-L-seryl-[protein] + H2O = L-seryl-[protein] + phosphate. The catalysed reaction is O-phospho-L-threonyl-[protein] + H2O = L-threonyl-[protein] + phosphate. Functionally, shows activity both for tyrosine-protein phosphate and serine-protein phosphate, but displays a strong preference toward phosphotyrosines. Specifically dephosphorylates and inactivates ERK1 and ERK2. The sequence is that of Dual specificity protein phosphatase 3 (DUSP3) from Homo sapiens (Human).